The primary structure comprises 1496 residues: Synaptojanin-2 (1496 aa).

Residues 120-444 enclose the SAC domain; the sequence is LKKILSSGVF…GHSLSKVFTG (325 aa). The 80-residue stretch at 889 to 968 folds into the RRM domain; the sequence is DATVVVNLQS…RAVKIRPKTK (80 aa). Disordered regions lie at residues 1027 to 1073, 1085 to 1166, 1190 to 1405, and 1427 to 1473; these read NQPG…DDAD, GEFR…YNVK, ASEE…PEAA, and NTWL…KTLG. Over residues 1101–1115 the composition is skewed to pro residues; it reads RPRPPQPPQRPPPPT. A phosphoserine mark is found at Ser-1124 and Ser-1191. Over residues 1124 to 1140 the composition is skewed to polar residues; the sequence is SDASISSGTHGQYSILQ. Pro residues-rich tracts occupy residues 1221–1235 and 1319–1332; these read PQAPPLLPRRPPPRV and VPPPLEAPPLVPKV. The span at 1340-1359 shows a compositional bias: low complexity; that stretch reads APAAFHLQVLQSNSQLLQGL. Composition is skewed to polar residues over residues 1383–1394 and 1427–1442; these read FLSTSSATSPDS and NTWLSKSSDPLDSGTR.

This sequence belongs to the synaptojanin family. It in the central section; belongs to the inositol 1,4,5-trisphosphate 5-phosphatase family. In terms of assembly, binds to GRB2. Isoform 2A binds to SYNJ2BP/OMP25. Isoform 2B2 C-terminal proline-rich region binds to a variety of SH3 domain-containing proteins including SH3GL1, SH3GL2, SH3GL3 and GRB2.

The protein resides in the cytoplasm. It localises to the cell membrane. The protein localises to the membrane raft. Its subcellular location is the presynapse. It is found in the cytoskeleton. The enzyme catalyses a 1,2-diacyl-sn-glycero-3-phospho-(1D-myo-inositol-4,5-bisphosphate) + H2O = a 1,2-diacyl-sn-glycero-3-phospho-(1D-myo-inositol 4-phosphate) + phosphate. In terms of biological role, inositol 5-phosphatase which may be involved in distinct membrane trafficking and signal transduction pathways. May mediate the inhibitory effect of Rac1 on endocytosis. The sequence is that of Synaptojanin-2 (SYNJ2) from Homo sapiens (Human).